A 312-amino-acid polypeptide reads, in one-letter code: Malate dehydrogenase (312 aa).

NAD(+)-binding positions include 12–17 and Asp36; that span reads GAGFTG. Substrate contacts are provided by Arg87 and Arg93. NAD(+)-binding positions include Asn100 and 123 to 125; that span reads LTN. Asn125 lines the substrate pocket. Ser149 bears the Phosphoserine mark. Arg156 is a binding site for substrate. Residue His180 is the Proton acceptor of the active site.

Belongs to the LDH/MDH superfamily. MDH type 3 family.

It catalyses the reaction (S)-malate + NAD(+) = oxaloacetate + NADH + H(+). Catalyzes the reversible oxidation of malate to oxaloacetate. This Bacillus cereus (strain ZK / E33L) protein is Malate dehydrogenase.